A 243-amino-acid chain; its full sequence is Orotidine 5'-phosphate decarboxylase (243 aa).

Substrate contacts are provided by residues Asp-18, Lys-39, 66–75 (DLKFHDIPAT), Thr-130, Arg-192, Gln-201, Gly-221, and Arg-222. The Proton donor role is filled by Lys-68.

This sequence belongs to the OMP decarboxylase family. Type 1 subfamily. In terms of assembly, homodimer.

It carries out the reaction orotidine 5'-phosphate + H(+) = UMP + CO2. The protein operates within pyrimidine metabolism; UMP biosynthesis via de novo pathway; UMP from orotate: step 2/2. In terms of biological role, catalyzes the decarboxylation of orotidine 5'-monophosphate (OMP) to uridine 5'-monophosphate (UMP). This Synechococcus sp. (strain WH7803) protein is Orotidine 5'-phosphate decarboxylase.